A 290-amino-acid polypeptide reads, in one-letter code: Putative neuropeptide Y receptor type 6 (290 aa).

Residues 1–39 (MEVSLNHPASNTTSTKNNNSAFFYFESCQPPSPALLLLC) are Extracellular-facing. An N-linked (GlcNAc...) asparagine glycan is attached at Asn11. The chain crosses the membrane as a helical span at residues 40 to 60 (IAYTVVLIVGLFGNLSLIIII). Topologically, residues 61 to 83 (FKKQRKAQNFTSILIANLSLSDT) are cytoplasmic. A helical transmembrane segment spans residues 84–104 (LVCVMCIHFTIIYTLMDHWIF). At 105 to 111 (GDTMCRL) the chain is on the extracellular side. An intrachain disulfide couples Cys109 to Cys196. A helical transmembrane segment spans residues 112 to 132 (TSYVQSVSISVSIFSLVFTAV). Topologically, residues 133-150 (ERYQLIVNPRGWKPSVTH) are cytoplasmic. A helical membrane pass occupies residues 151–171 (AYWGITLIWLFSLLLSIPFFL). Residues 172–206 (SYHLTDEPFRNLSLPTDLYTHQVACVENWPSKKDR) are Extracellular-facing. Residues 207-227 (LLFTTSLFLLQYFVPLGFILI) traverse the membrane as a helical segment. At 228 to 258 (CYLKIVICLRRRNAKVDKKKENEGRLNENKR) the chain is on the cytoplasmic side. The chain crosses the membrane as a helical span at residues 259–279 (INTMLISIVVTFGACWLPRIS). Over 280-290 (SMSSLTGIMRC) the chain is Extracellular.

The protein belongs to the G-protein coupled receptor 1 family. As to expression, expressed in heart, skeletal muscle, gastrointestinal tissues, spleen, brain and adrenal glands.

The protein resides in the membrane. Its function is as follows. When expressed, is unable to bind pancreatic polypeptide (PP), neuropeptide Y (NPY), or peptide YY (PYY), suggesting that either it is functionally inactive or that it may have acquired a pancreatic polypeptide-independent function. The polypeptide is Putative neuropeptide Y receptor type 6 (NPY6R) (Homo sapiens (Human)).